A 151-amino-acid polypeptide reads, in one-letter code: Ribosomal RNA large subunit methyltransferase H (151 aa).

Residues Leu73, Gly100, and 119–124 contribute to the S-adenosyl-L-methionine site; that span reads LTKLTL.

This sequence belongs to the RNA methyltransferase RlmH family. In terms of assembly, homodimer.

The protein localises to the cytoplasm. It carries out the reaction pseudouridine(1915) in 23S rRNA + S-adenosyl-L-methionine = N(3)-methylpseudouridine(1915) in 23S rRNA + S-adenosyl-L-homocysteine + H(+). Functionally, specifically methylates the pseudouridine at position 1915 (m3Psi1915) in 23S rRNA. This Campylobacter hominis (strain ATCC BAA-381 / DSM 21671 / CCUG 45161 / LMG 19568 / NCTC 13146 / CH001A) protein is Ribosomal RNA large subunit methyltransferase H.